Consider the following 174-residue polypeptide: Co-chaperone protein HscB homolog (174 aa).

The region spanning 2–74 (NYFELFKFPP…IRRAEHMLSL (73 aa)) is the J domain.

The protein belongs to the HscB family. Interacts with HscA and stimulates its ATPase activity.

In terms of biological role, co-chaperone involved in the maturation of iron-sulfur cluster-containing proteins. Seems to help targeting proteins to be folded toward HscA. The sequence is that of Co-chaperone protein HscB homolog from Shewanella baltica (strain OS195).